The chain runs to 82 residues: ATP synthase subunit c, chloroplastic (82 aa).

Transmembrane regions (helical) follow at residues 7–27 (GASVIAAGLAIGLASIGPGIG) and 57–77 (LAFMESLTIYGLVVALCLLFA).

Belongs to the ATPase C chain family. In terms of assembly, F-type ATPases have 2 components, F(1) - the catalytic core - and F(0) - the membrane proton channel. F(1) has five subunits: alpha(3), beta(3), gamma(1), delta(1), epsilon(1). F(0) has four main subunits: a(1), b(1), b'(1) and c(10-14). The alpha and beta chains form an alternating ring which encloses part of the gamma chain. F(1) is attached to F(0) by a central stalk formed by the gamma and epsilon chains, while a peripheral stalk is formed by the delta, b and b' chains.

It is found in the plastid. Its subcellular location is the chloroplast thylakoid membrane. Functionally, f(1)F(0) ATP synthase produces ATP from ADP in the presence of a proton or sodium gradient. F-type ATPases consist of two structural domains, F(1) containing the extramembraneous catalytic core and F(0) containing the membrane proton channel, linked together by a central stalk and a peripheral stalk. During catalysis, ATP synthesis in the catalytic domain of F(1) is coupled via a rotary mechanism of the central stalk subunits to proton translocation. Its function is as follows. Key component of the F(0) channel; it plays a direct role in translocation across the membrane. A homomeric c-ring of between 10-14 subunits forms the central stalk rotor element with the F(1) delta and epsilon subunits. The polypeptide is ATP synthase subunit c, chloroplastic (Emiliania huxleyi (Coccolithophore)).